A 436-amino-acid polypeptide reads, in one-letter code: Serine hydroxymethyltransferase (436 aa).

Residues L120 and 124-126 (GHL) contribute to the (6S)-5,6,7,8-tetrahydrofolate site. K229 carries the post-translational modification N6-(pyridoxal phosphate)lysine.

This sequence belongs to the SHMT family. As to quaternary structure, homodimer. The cofactor is pyridoxal 5'-phosphate.

Its subcellular location is the cytoplasm. It catalyses the reaction (6R)-5,10-methylene-5,6,7,8-tetrahydrofolate + glycine + H2O = (6S)-5,6,7,8-tetrahydrofolate + L-serine. Its pathway is one-carbon metabolism; tetrahydrofolate interconversion. It participates in amino-acid biosynthesis; glycine biosynthesis; glycine from L-serine: step 1/1. In terms of biological role, catalyzes the reversible interconversion of serine and glycine with tetrahydrofolate (THF) serving as the one-carbon carrier. This reaction serves as the major source of one-carbon groups required for the biosynthesis of purines, thymidylate, methionine, and other important biomolecules. Also exhibits THF-independent aldolase activity toward beta-hydroxyamino acids, producing glycine and aldehydes, via a retro-aldol mechanism. In Roseiflexus castenholzii (strain DSM 13941 / HLO8), this protein is Serine hydroxymethyltransferase.